The chain runs to 614 residues: UvrABC system protein C (614 aa).

In terms of domain architecture, GIY-YIG spans 14-91 (TSPGCYIHKD…IKENKPKYNI (78 aa)). The UVR domain occupies 196–231 (NKIIDELKGKMAAAAQTMEFERAAEYRDLIQAIGTL). The disordered stretch occupies residues 595–614 (LPQVAEERVDYQTEGNHNKP).

This sequence belongs to the UvrC family. In terms of assembly, interacts with UvrB in an incision complex.

The protein localises to the cytoplasm. In terms of biological role, the UvrABC repair system catalyzes the recognition and processing of DNA lesions. UvrC both incises the 5' and 3' sides of the lesion. The N-terminal half is responsible for the 3' incision and the C-terminal half is responsible for the 5' incision. This Streptococcus pneumoniae (strain Taiwan19F-14) protein is UvrABC system protein C.